The chain runs to 312 residues: Aspartate carbamoyltransferase catalytic subunit (312 aa).

Carbamoyl phosphate is bound by residues R58 and T59. Residue K86 participates in L-aspartate binding. Carbamoyl phosphate-binding residues include R108, H136, and Q139. Residues R169 and R223 each coordinate L-aspartate. G264 and P265 together coordinate carbamoyl phosphate.

Belongs to the aspartate/ornithine carbamoyltransferase superfamily. ATCase family. In terms of assembly, heterododecamer (2C3:3R2) of six catalytic PyrB chains organized as two trimers (C3), and six regulatory PyrI chains organized as three dimers (R2).

It carries out the reaction carbamoyl phosphate + L-aspartate = N-carbamoyl-L-aspartate + phosphate + H(+). It participates in pyrimidine metabolism; UMP biosynthesis via de novo pathway; (S)-dihydroorotate from bicarbonate: step 2/3. Functionally, catalyzes the condensation of carbamoyl phosphate and aspartate to form carbamoyl aspartate and inorganic phosphate, the committed step in the de novo pyrimidine nucleotide biosynthesis pathway. This Desulforapulum autotrophicum (strain ATCC 43914 / DSM 3382 / VKM B-1955 / HRM2) (Desulfobacterium autotrophicum) protein is Aspartate carbamoyltransferase catalytic subunit.